A 101-amino-acid chain; its full sequence is Large ribosomal subunit protein uL23 (101 aa).

The protein belongs to the universal ribosomal protein uL23 family. As to quaternary structure, part of the 50S ribosomal subunit. Contacts protein L29, and trigger factor when it is bound to the ribosome.

Functionally, one of the early assembly proteins it binds 23S rRNA. One of the proteins that surrounds the polypeptide exit tunnel on the outside of the ribosome. Forms the main docking site for trigger factor binding to the ribosome. This Corynebacterium efficiens (strain DSM 44549 / YS-314 / AJ 12310 / JCM 11189 / NBRC 100395) protein is Large ribosomal subunit protein uL23.